The sequence spans 2473 residues: Neurogenic locus notch homolog protein 2 (2473 aa).

The N-terminal stretch at 1-25 (MPALRPAALRALLWLWLCGAGPAHA) is a signal peptide. EGF-like domains follow at residues 26-63 (LQCRGGQEPCVNEGTCVTYHNGTGFCRCPEGFLGEYCQ), 64-102 (HRDPCEKNRCQNGGTCVPQGMLGKATCRCAPGFTGEDCQ), 105-143 (TSHPCFVSRPCQNGGTCHMLSRDTYECTCQVGFTGKQCQ), and 144-180 (WTDACLSHPCENGSTCTSVASQFSCKCPAGLTGQKCE). Over 26-1679 (LQCRGGQEPC…SELESPRNAQ (1654 aa)) the chain is Extracellular. 83 disulfides stabilise this stretch: cysteine 28–cysteine 41, cysteine 35–cysteine 51, cysteine 53–cysteine 62, cysteine 68–cysteine 79, cysteine 73–cysteine 90, cysteine 92–cysteine 101, cysteine 109–cysteine 121, cysteine 115–cysteine 131, cysteine 133–cysteine 142, cysteine 148–cysteine 159, cysteine 153–cysteine 168, cysteine 170–cysteine 179, cysteine 186–cysteine 198, cysteine 192–cysteine 207, cysteine 209–cysteine 218, cysteine 230–cysteine 246, cysteine 248–cysteine 257, cysteine 264–cysteine 275, cysteine 269–cysteine 284, cysteine 286–cysteine 295, cysteine 302–cysteine 315, cysteine 309–cysteine 324, cysteine 326–cysteine 335, cysteine 342–cysteine 353, cysteine 347–cysteine 362, cysteine 364–cysteine 373, cysteine 379–cysteine 390, cysteine 384–cysteine 401, cysteine 403–cysteine 412, cysteine 419–cysteine 433, cysteine 427–cysteine 442, cysteine 444–cysteine 453, cysteine 460–cysteine 471, cysteine 465–cysteine 480, cysteine 482–cysteine 491, cysteine 498–cysteine 509, cysteine 503–cysteine 518, cysteine 520–cysteine 529, cysteine 536–cysteine 547, cysteine 541–cysteine 556, cysteine 558–cysteine 567, cysteine 574–cysteine 584, cysteine 579–cysteine 593, cysteine 595–cysteine 604, cysteine 611–cysteine 622, cysteine 616–cysteine 631, cysteine 633–cysteine 642, cysteine 649–cysteine 659, cysteine 654–cysteine 668, cysteine 670–cysteine 679, cysteine 686–cysteine 697, cysteine 691–cysteine 706, cysteine 708–cysteine 717, cysteine 724–cysteine 734, cysteine 729–cysteine 743, cysteine 745–cysteine 754, cysteine 761–cysteine 772, cysteine 766–cysteine 781, cysteine 783–cysteine 792, cysteine 799–cysteine 810, cysteine 804–cysteine 819, cysteine 821–cysteine 830, cysteine 837–cysteine 848, cysteine 842–cysteine 859, cysteine 861–cysteine 870, cysteine 877–cysteine 888, cysteine 882–cysteine 897, cysteine 899–cysteine 908, cysteine 915–cysteine 926, cysteine 920–cysteine 935, cysteine 937–cysteine 946, cysteine 953–cysteine 964, cysteine 958–cysteine 973, cysteine 975–cysteine 984, cysteine 991–cysteine 1002, cysteine 996–cysteine 1011, cysteine 1013–cysteine 1022, cysteine 1029–cysteine 1040, cysteine 1034–cysteine 1049, cysteine 1051–cysteine 1060, cysteine 1067–cysteine 1078, cysteine 1072–cysteine 1087, and cysteine 1089–cysteine 1098. Asparagine 46 carries an N-linked (GlcNAc...) asparagine glycan. N-linked (GlcNAc...) asparagine glycosylation occurs at asparagine 155. The region spanning 182-219 (DINECDIPGRCQHGGTCLNLPGSYRCQCPQGFTGQHCD) is the EGF-like 5; calcium-binding domain. Residues 221–258 (PYVPCAPSPCVNGGTCRQTGDFTFECNCLPGFEGSTCE) form the EGF-like 6; incomplete domain. One can recognise an EGF-like 7; calcium-binding domain in the interval 260-296 (NIDDCPNHKCQNGGVCVDGVNTYNCRCPPQWTGQFCT). Residues 298 to 336 (DVDECLLQPNACQNGGTCTNRNGGYGCVCVNGWSGDDCS) form the EGF-like 8; calcium-binding domain. The region spanning 338-374 (NIDDCAYASCTPGSTCIDRVASFSCLCPEGKAGLLCH) is the EGF-like 9; calcium-binding domain. The region spanning 375-413 (LDDACISNPCHKGALCDTNPLNGQYICTCPQGYKGADCT) is the EGF-like 10 domain. Residues 415 to 454 (DVDECAMANSNPCEHAGKCVNTDGAFHCECLKGYAGPRCE) form the EGF-like 11; calcium-binding domain. The EGF-like 12; calcium-binding domain occupies 456-492 (DINECHSDPCQNDATCLDKIGGFTCLCMPGFKGVHCE). Positions 494 to 530 (EVNECQSNPCVNNGQCVDKVNRFQCLCPPGFTGPVCQ) constitute an EGF-like 13; calcium-binding domain. The 37-residue stretch at 532–568 (DIDDCSSTPCLNGAKCIDHPNGYECQCATGFTGILCD) folds into the EGF-like 14; calcium-binding domain. The region spanning 570 to 605 (NIDNCDPDPCHHGQCQDGIDSYTCICNPGYMGAICS) is the EGF-like 15; calcium-binding domain. Residues 607-643 (QIDECYSSPCLNDGRCIDLVNGYQCNCQPGTSGLNCE) form the EGF-like 16; calcium-binding domain. An O-linked (Glc...) serine; alternate glycan is attached at serine 613. A glycan (O-linked (Xyl...) serine; alternate) is linked at serine 613. One can recognise an EGF-like 17; calcium-binding domain in the interval 645-680 (NFDDCASNPCMHGVCVDGINRYSCVCSPGFTGQRCN). One can recognise an EGF-like 18; calcium-binding domain in the interval 682–718 (DIDECASNPCRKGATCINDVNGFRCICPEGPHHPSCY). The 36-residue stretch at 720–755 (QVNECLSNPCIHGNCTGGLSGYKCLCDAGWVGVNCE) folds into the EGF-like 19 domain. Asparagine 733 carries an N-linked (GlcNAc...) asparagine glycan. Residues 757 to 793 (DKNECLSNPCQNGGTCNNLVNGYRCTCKKGFKGYNCQ) enclose the EGF-like 20; calcium-binding domain. In terms of domain architecture, EGF-like 21; calcium-binding spans 795-831 (NIDECASNPCLNQGTCFDDVSGYTCHCMLPYTGKNCQ). Residues 833-871 (VLAPCSPNPCENAAVCKEAPNFESFSCLCAPGWQGKRCT) enclose the EGF-like 22 domain. Residues 873–909 (DVDECISKPCMNNGVCHNTQGSYVCECPPGFSGMDCE) enclose the EGF-like 23; calcium-binding domain. An EGF-like 24; calcium-binding domain is found at 911–947 (DINDCLANPCQNGGSCVDHVNTFSCQCHPGFIGDKCQ). Residues 949 to 985 (DMNECLSEPCKNGGTCSDYVNSYTCTCPAGFHGVHCE) enclose the EGF-like 25; calcium-binding domain. The EGF-like 26; calcium-binding domain occupies 987-1023 (NIDECTESSCFNGGTCVDGINSFSCLCPVGFTGPFCL). Residues 1025–1061 (DINECSSNPCLNAGTCVDGLGTYRCICPLGYTGKNCQ) form the EGF-like 27; calcium-binding domain. EGF-like domains are found at residues 1063-1099 (LVNLCSRSPCKNKGTCVQEKARPHCLCPPGWDGAYCD) and 1101-1147 (LNVS…SYCE). N-linked (GlcNAc...) asparagine glycosylation occurs at asparagine 1102. 24 disulfide bridges follow: cysteine 1105-cysteine 1126, cysteine 1120-cysteine 1135, cysteine 1137-cysteine 1146, cysteine 1153-cysteine 1164, cysteine 1158-cysteine 1173, cysteine 1175-cysteine 1184, cysteine 1191-cysteine 1202, cysteine 1196-cysteine 1211, cysteine 1213-cysteine 1222, cysteine 1229-cysteine 1241, cysteine 1235-cysteine 1250, cysteine 1252-cysteine 1261, cysteine 1268-cysteine 1281, cysteine 1273-cysteine 1290, cysteine 1292-cysteine 1301, cysteine 1308-cysteine 1319, cysteine 1313-cysteine 1331, cysteine 1333-cysteine 1346, cysteine 1378-cysteine 1389, cysteine 1383-cysteine 1400, cysteine 1402-cysteine 1411, cysteine 1425-cysteine 1448, cysteine 1430-cysteine 1443, and cysteine 1439-cysteine 1455. The 37-residue stretch at 1149 to 1185 (QLDECASNPCQHGATCNDFIGGYRCECVPGYQGVNCE) folds into the EGF-like 30; calcium-binding domain. Residues 1187–1223 (EVDECQNQPCQNGGTCIDLVNHFKCSCPPGTRGLLCE) enclose the EGF-like 31; calcium-binding domain. The EGF-like 32; calcium-binding domain occupies 1225–1262 (NIDECAGGPHCLNGGQCVDRIGGYTCRCLPGFAGERCE). EGF-like domains lie at 1264 to 1302 (DINECLSNPCSSEGSLDCVQLKNNYNCICRSAFTGRHCE), 1304 to 1343 (FLDVCPQKPCLNGGTCAVASNMPDGFICRCPPGFSGARCQ), and 1375 to 1412 (ESGCASNPCQHGGTCYPQRQPPHYSCRCPPSFGGSHCE). 3 LNR repeats span residues 1425 to 1465 (CQSQ…PWAN), 1466 to 1502 (CTSTLRCWEYINNQCDEQCNTAECLFDNFECQRNSKT), and 1503 to 1544 (CKYD…NLAE). A negative regulatory region (NRR) region spans residues 1425-1679 (CQSQYCADKA…SELESPRNAQ (255 aa)). A glycan (N-linked (GlcNAc...) asparagine) is linked at asparagine 1465. 7 disulfide bridges follow: cysteine 1466/cysteine 1489, cysteine 1472/cysteine 1484, cysteine 1480/cysteine 1496, cysteine 1503/cysteine 1527, cysteine 1509/cysteine 1522, cysteine 1518/cysteine 1534, and cysteine 1634/cysteine 1641. The chain crosses the membrane as a helical span at residues 1680 to 1700 (LLYLLAVAVVIILFFILLGVI). Over 1701–2473 (MAKRKRKHGF…PPHSNMQVYA (773 aa)) the chain is Cytoplasmic. Threonine 1718 bears the Phosphothreonine mark. The segment at 1755 to 1778 (GTSEHWVDDEGPQPKKAKAEDEAL) is disordered. Serine 1780 is subject to Phosphoserine. The residue at position 1803 (threonine 1803) is a Phosphothreonine. Serine 1805 is modified (phosphoserine). Threonine 1809 carries the post-translational modification Phosphothreonine. 6 ANK repeats span residues 1828 to 1872 (DGCT…SLQA), 1877 to 1906 (TGEMALHLAARYSRADAAKRLLDAGADANA), 1910 to 1940 (MGRCPLHAAVAADAQGVFQILIRNRVTDLDA), 1944 to 1973 (DGTTPLILAARLAVEGMVAELINCQADVNA), 1977 to 2006 (HGKSALHWAAAVNNVEATLLLLKNGANRDM), and 2010 to 2039 (KEETPLFLAAREGSYEAAKILLDHFANRDI). 2 positions are modified to phosphoserine: serine 1843 and serine 1846. 3 positions are modified to phosphoserine: serine 2071, serine 2079, and serine 2082. Residue threonine 2098 is modified to Phosphothreonine. 3 disordered regions span residues 2098–2117 (TPMGKKARRPNTKSTMPTSL), 2122–2169 (KEAK…TSSP), and 2382–2473 (VGKY…QVYA). Residues 2099 to 2108 (PMGKKARRPN) are compositionally biased toward basic residues. 2 stretches are compositionally biased toward polar residues: residues 2140-2151 (VQLSESSVTLSP) and 2390-2400 (SQHSYASSNAA). The span at 2419–2446 (PSPESPDQWSSSSPHSASDWSDVTTSPT) shows a compositional bias: low complexity. A compositionally biased stretch (gly residues) spans 2447 to 2456 (PGGGGGGQRG).

This sequence belongs to the NOTCH family. In terms of assembly, heterodimer of a C-terminal fragment N(TM) and an N-terminal fragment N(EC) which are probably linked by disulfide bonds. Interacts with MAML1, MAML2 and MAML3 which act as transcriptional coactivators for NOTCH2. Interacts with RELA/p65. Interacts with HIF1AN. Interacts (via ANK repeats) with TCIM, the interaction inhibits the nuclear translocation of NOTCH2 N2ICD. Interacts with CUL1, RBX1, SKP1 and FBXW7 that are SCF(FBXW7) E3 ubiquitin-protein ligase complex components. Interacts with MINAR1; this interaction increases MINAR1 stability and function. Interacts with MDK; this interaction mediates a nuclear accumulation of NOTCH2 and therefore activation of NOTCH2 signaling leading to interaction between HES1 and STAT3. Interacts with MINAR2. Synthesized in the endoplasmic reticulum as an inactive form which is proteolytically cleaved by a furin-like convertase in the trans-Golgi network before it reaches the plasma membrane to yield an active, ligand-accessible form. Cleavage results in a C-terminal fragment N(TM) and a N-terminal fragment N(EC). Following ligand binding, it is cleaved by TNF-alpha converting enzyme (TACE) to yield a membrane-associated intermediate fragment called notch extracellular truncation (NEXT). This fragment is then cleaved by presenilin dependent gamma-secretase to release a notch-derived peptide containing the intracellular domain (NICD) from the membrane. Post-translationally, hydroxylated by HIF1AN. In terms of processing, can be either O-glucosylated or O-xylosylated at Ser-613 by POGLUT1. Phosphorylated by GSK3. GSK3-mediated phosphorylation is necessary for NOTCH2 recognition by FBXW7, ubiquitination and degradation via the ubiquitin proteasome pathway. In terms of tissue distribution, expressed in the brain, liver, kidney, neuroepithelia, somites, optic vesicles and branchial arches, but not heart.

Its subcellular location is the cell membrane. The protein localises to the nucleus. The protein resides in the cytoplasm. Functions as a receptor for membrane-bound ligands Jagged-1 (JAG1), Jagged-2 (JAG2) and Delta-1 (DLL1) to regulate cell-fate determination. Upon ligand activation through the released notch intracellular domain (NICD) it forms a transcriptional activator complex with RBPJ/RBPSUH and activates genes of the enhancer of split locus. Affects the implementation of differentiation, proliferation and apoptotic programs. May play an essential role in postimplantation development, probably in some aspect of cell specification and/or differentiation. In collaboration with RELA/p65 enhances NFATc1 promoter activity and positively regulates RANKL-induced osteoclast differentiation. Positively regulates self-renewal of liver cancer cells. In Mus musculus (Mouse), this protein is Neurogenic locus notch homolog protein 2.